A 298-amino-acid chain; its full sequence is N-acetylmuramic acid 6-phosphate etherase 2 (298 aa).

The 164-residue stretch at 51–214 (IVSRFEQGGR…STAAMVRLGR (164 aa)) folds into the SIS domain. The active-site Proton donor is Glu-79. Glu-110 is an active-site residue.

This sequence belongs to the GCKR-like family. MurNAc-6-P etherase subfamily. As to quaternary structure, homodimer.

The enzyme catalyses N-acetyl-D-muramate 6-phosphate + H2O = N-acetyl-D-glucosamine 6-phosphate + (R)-lactate. The protein operates within amino-sugar metabolism; N-acetylmuramate degradation. Specifically catalyzes the cleavage of the D-lactyl ether substituent of MurNAc 6-phosphate, producing GlcNAc 6-phosphate and D-lactate. This chain is N-acetylmuramic acid 6-phosphate etherase 2, found in Bacillus licheniformis (strain ATCC 14580 / DSM 13 / JCM 2505 / CCUG 7422 / NBRC 12200 / NCIMB 9375 / NCTC 10341 / NRRL NRS-1264 / Gibson 46).